Reading from the N-terminus, the 600-residue chain is MASQLIENKLKLLPEKAGCYLMKDVNGKVIYVGKSKNLKNRVRSYFKSSQEGRRAELVKNIADYDIIVVDSDKEAFLLEVTLIKKYQPYYNVALKSGTGYPYIEITNEKNPQTRLTSIVYKDKGYYFGPYPNVYAASATLKFIQKVFPLRRCSGYTGRPCLYYHMGQCLGSCFKEVPQSEYDEQIKKIKRFLNGDIQEVKKDLTNKMLQASADLEFERAGELRDQLKYIEETVEKQKIISNDHTQRDIFNYYVDRSWISIQVFFLRQAKLLRRESHMFPLTDETDPEDEFMSFIAQFYAQKNRVNPREVLVPKGIDQDELAAAIGIKVRTPQRGQKASLMEMARENAQLKLDDKFRLLELGQRKTKGAQEEIFKALGLPYGSYIESFDHSHIQGADPVSALVVFKDGEPFKTGYRKFKLKGEVEHQNSADEVGNTREVVRRRYSRLLKEHERMPDLILMDGGQIQVEACEDVLRNELNLDIPVAGMVKDDKHRTNHLLYGDPFKGQPFKLIPMDPKSEGFYLMTRIQDEVHRFAITFHRQTHAKNSLVSRLDSIKGIGPKSRTKLLREFGSLKKIKEASIDDLRKAGLTLTQAQAVKISL.

One can recognise a GIY-YIG domain in the interval 15–92 (EKAGCYLMKD…IKKYQPYYNV (78 aa)). Residues 197 to 232 (QEVKKDLTNKMLQASADLEFERAGELRDQLKYIEET) enclose the UVR domain.

It belongs to the UvrC family. As to quaternary structure, interacts with UvrB in an incision complex.

It localises to the cytoplasm. Functionally, the UvrABC repair system catalyzes the recognition and processing of DNA lesions. UvrC both incises the 5' and 3' sides of the lesion. The N-terminal half is responsible for the 3' incision and the C-terminal half is responsible for the 5' incision. The chain is UvrABC system protein C from Lactobacillus delbrueckii subsp. bulgaricus (strain ATCC BAA-365 / Lb-18).